The following is a 457-amino-acid chain: Fibrinogen C domain-containing protein 1-B (457 aa).

Positions 1–21 (MGSDRWKNIRGTPQMEDSVQE) are disordered. Over 1–33 (MGSDRWKNIRGTPQMEDSVQEKSQRKGCGYILC) the chain is Cytoplasmic. The helical; Signal-anchor for type II membrane protein transmembrane segment at 34–54 (TVLLSVAVLLAVTVTGAVLFM) threads the bilayer. Residues 55–457 (NQYHAPSTEP…MKIRPQREEN (403 aa)) are Extracellular-facing. The region spanning 231–454 (CANGSKPRDC…FTEMKIRPQR (224 aa)) is the Fibrinogen C-terminal domain. N-linked (GlcNAc...) asparagine glycosylation occurs at Asn-233. An intrachain disulfide couples Cys-240 to Cys-269. Asn-336 carries an N-linked (GlcNAc...) asparagine glycan. Residues Asp-389 and Asp-391 each contribute to the Ca(2+) site. The cysteines at positions 397 and 410 are disulfide-linked.

In terms of assembly, homotetramer; disulfide-linked.

It localises to the membrane. Acetyl group-binding receptor which shows a calcium-dependent binding to acetylated structures such as chitin, some N-acetylated carbohydrates, and amino acids. The chain is Fibrinogen C domain-containing protein 1-B (fibcd1-b) from Xenopus laevis (African clawed frog).